Consider the following 319-residue polypeptide: D-alanine--D-alanine ligase (319 aa).

A disordered region spans residues 1 to 23; that stretch reads MTGPEWAHTRGTKVGQSSRTPPK. The ATP-grasp domain occupies 120–313; sequence KDAFVAAGLP…FGKLCAWMVE (194 aa). Residue 147 to 197 participates in ATP binding; that stretch reads MQPPYVVKPNNEGSSVGVYLVHEAANGPPQLSEDMPQEVMVEAFAPGRELT. The Mg(2+) site is built by aspartate 264, glutamate 280, and asparagine 282.

Belongs to the D-alanine--D-alanine ligase family. The cofactor is Mg(2+). It depends on Mn(2+) as a cofactor.

Its subcellular location is the cytoplasm. The enzyme catalyses 2 D-alanine + ATP = D-alanyl-D-alanine + ADP + phosphate + H(+). It functions in the pathway cell wall biogenesis; peptidoglycan biosynthesis. In terms of biological role, cell wall formation. The sequence is that of D-alanine--D-alanine ligase from Roseobacter denitrificans (strain ATCC 33942 / OCh 114) (Erythrobacter sp. (strain OCh 114)).